The following is a 976-amino-acid chain: Vacuolar membrane protease (976 aa).

Topologically, residues 1-51 are cytoplasmic; the sequence is MPLSTGLTLSSLNVMEKADNHYNMMTKQPPALSPVDMVSSRRGFNPIAFTP. A helical transmembrane segment spans residues 52–72; it reads WPVTILSSLVYLAFIIPIIVV. Topologically, residues 73–399 are vacuolar; sequence HHLVPPAPKE…DNGNDGKLNN (327 aa). Asn-147 and Asn-150 each carry an N-linked (GlcNAc...) asparagine glycan. Positions 206 and 218 each coordinate Zn(2+). The active-site Proton acceptor is the Glu-252. 3 residues coordinate Zn(2+): Glu-253, Glu-278, and His-351. Residues 400–420 form a helical membrane-spanning segment; sequence GAGTLGVWFDFYGSSFAVFEL. The Cytoplasmic portion of the chain corresponds to 421–427; sequence NTLFGHS. The helical transmembrane segment at 428 to 448 threads the bilayer; sequence VALLVVAPLLLIATCVTLYTL. The Vacuolar segment spans residues 449–477; that stretch reads DKMYMFSMYTYLSESGGQVSLYGLRGLFR. The helical transmembrane segment at 478–498 threads the bilayer; the sequence is FPLILGISTALTIGLAFLLMK. Residues 499 to 519 are Cytoplasmic-facing; sequence ANPFIIYSSPYAVWNPSALHR. The chain crosses the membrane as a helical span at residues 520 to 540; sequence AYAFTWMFGMMWVLLVIATVY. Over 541–550 the chain is Vacuolar; that stretch reads QKQHGIASSY. The chain crosses the membrane as a helical span at residues 551-571; that stretch reads FIVFYFAGVSIATWISYLELF. Residues 572–675 lie on the Cytoplasmic side of the membrane; the sequence is GLPTTQDYAR…HRLEQRWSIN (104 aa). The interval 590–633 is disordered; the sequence is TPSSDSRLLAPSADELPPSGSAAGHDFNPEDVEDEEPTESTSLL. Residues 618 to 627 show a composition bias toward acidic residues; that stretch reads PEDVEDEEPT. The chain crosses the membrane as a helical span at residues 676–696; the sequence is LISSAWILQFLFVAPIVIILL. Over 697–718 the chain is Vacuolar; it reads GQLGLFLTSATYQIGADGGSQL. Residues 719–739 traverse the membrane as a helical segment; that stretch reads VIYVGIAVLSVLILLPLFPFI. Residues 740–745 are Cytoplasmic-facing; it reads HRFTYH. The helical transmembrane segment at 746–766 threads the bilayer; it reads IPTFLLFVLIGTLVYNLTAFP. Residues 767 to 976 lie on the Vacuolar side of the membrane; it reads FSHSNRLKVA…LVEGSHSFKL (210 aa). The N-linked (GlcNAc...) asparagine glycan is linked to Asn-848.

This sequence belongs to the peptidase M28 family. Requires Zn(2+) as cofactor.

The protein resides in the vacuole membrane. Its function is as follows. May be involved in vacuolar sorting and osmoregulation. The protein is Vacuolar membrane protease of Arthroderma otae (strain ATCC MYA-4605 / CBS 113480) (Microsporum canis).